A 155-amino-acid polypeptide reads, in one-letter code: Endoribonuclease YbeY (155 aa).

Zn(2+) contacts are provided by H118, H122, and H128.

The protein belongs to the endoribonuclease YbeY family. Zn(2+) is required as a cofactor.

The protein resides in the cytoplasm. Single strand-specific metallo-endoribonuclease involved in late-stage 70S ribosome quality control and in maturation of the 3' terminus of the 16S rRNA. This is Endoribonuclease YbeY from Bordetella petrii (strain ATCC BAA-461 / DSM 12804 / CCUG 43448).